The sequence spans 65 residues: Conotoxin Bu19 (65 aa).

Positions 1–21 (MGMRMVFTVFLLVVLATTVVS) are cleaved as a signal peptide. A propeptide spanning residues 22-48 (FTSDRASDGRNAAANDKASDLAALAVR) is cleaved from the precursor. Cystine bridges form between C50–C56 and C51–C64. C64 carries the post-translational modification Cysteine amide.

The protein belongs to the conotoxin A superfamily. In terms of tissue distribution, expressed by the venom duct.

It is found in the secreted. This is Conotoxin Bu19 from Conus bullatus (Bubble cone).